Consider the following 20-residue polypeptide: 44 kDa cell wall protein 2 (20 aa).

The protein resides in the secreted. The protein localises to the cell wall. The sequence is that of 44 kDa cell wall protein 2 from Solanum lycopersicum (Tomato).